A 173-amino-acid chain; its full sequence is Co-chaperone protein HscB homolog (173 aa).

The J domain occupies 5–77; that stretch reads CHFALFDLQP…PRRARYLLAI (73 aa).

It belongs to the HscB family. As to quaternary structure, interacts with HscA and stimulates its ATPase activity.

Co-chaperone involved in the maturation of iron-sulfur cluster-containing proteins. Seems to help targeting proteins to be folded toward HscA. The protein is Co-chaperone protein HscB homolog of Pseudomonas putida (strain W619).